The chain runs to 369 residues: MTLALISTETTEEPSCKASVAAPAPKGGAQIGVKAARRPSELLQRDGAHDVAVAIPDDFELDFGGTLTQKRVIGRLHGKANAPLIVVAGGISADRYVHRTETKGLGWWSGAVGVRAPIDLTRFRVLAFDFAPEFGEDVKDAKTPLTITTQDQARLLALLLDHLGVEKVAAFIGCSYGGMIALAFGELFPDWAEQLVVVSAAHRPHPLATAWRGIQRRILQLGLETGRIDQAVGLARELAMTTYRTQEEFGDRFDSEAPSHAGQAYPVCDYLQARGRAYRDRTTPSRWLSLSDSIDRHRVEPEAITAPVTLIGFTTDRLCPIEDMRELADRLPNLWRFEQHASVYGHDAFLKEDKLVADILTSVLKDIDQ.

The interval 90–93 is important for substrate specificity; the sequence is GISA. An AB hydrolase-1 domain is found at 107–353; sequence WWSGAVGVRA…YGHDAFLKED (247 aa). The Nucleophile role is filled by S175. R236 is a substrate binding site. Active-site residues include D316 and H346. Position 347 (D347) interacts with substrate.

The protein belongs to the AB hydrolase superfamily. MetX family. As to quaternary structure, homodimer.

It is found in the cytoplasm. The catalysed reaction is L-homoserine + succinyl-CoA = O-succinyl-L-homoserine + CoA. It functions in the pathway amino-acid biosynthesis; L-methionine biosynthesis via de novo pathway; O-succinyl-L-homoserine from L-homoserine: step 1/1. Functionally, transfers a succinyl group from succinyl-CoA to L-homoserine, forming succinyl-L-homoserine. The protein is Homoserine O-succinyltransferase of Brevundimonas diminuta (strain ATCC 11568 / DSM 7234 / NBRC 12697 / NCIMB 9393 / NCTC 8545).